The following is a 102-amino-acid chain: Small ribosomal subunit protein uS10 (102 aa).

The protein belongs to the universal ribosomal protein uS10 family. As to quaternary structure, part of the 30S ribosomal subunit.

Its function is as follows. Involved in the binding of tRNA to the ribosomes. In Thermotoga maritima (strain ATCC 43589 / DSM 3109 / JCM 10099 / NBRC 100826 / MSB8), this protein is Small ribosomal subunit protein uS10.